The chain runs to 231 residues: NADH-ubiquinone oxidoreductase chain 4 (231 aa).

Helical transmembrane passes span 1–21 (PIAG…YGII), 34–54 (MFLP…LTCL), 63–85 (IAYS…TPWG), 89–111 (AMAL…NTTY), 128–148 (ILPM…AIPP), 156–176 (LLIM…LGLS), and 211–231 (LLMI…ELII).

It belongs to the complex I subunit 4 family.

It is found in the mitochondrion membrane. It catalyses the reaction a ubiquinone + NADH + 5 H(+)(in) = a ubiquinol + NAD(+) + 4 H(+)(out). Core subunit of the mitochondrial membrane respiratory chain NADH dehydrogenase (Complex I) that is believed to belong to the minimal assembly required for catalysis. Complex I functions in the transfer of electrons from NADH to the respiratory chain. The immediate electron acceptor for the enzyme is believed to be ubiquinone. The polypeptide is NADH-ubiquinone oxidoreductase chain 4 (MT-ND4) (Agkistrodon piscivorus piscivorus (Eastern cottonmouth)).